We begin with the raw amino-acid sequence, 147 residues long: Fibromodulin (147 aa).

6 LRR repeats span residues 1–15 (LDHN…PLPR), 16–37 (SLRE…ALEG), 40–61 (NLTA…MRGL), 63–84 (SLIL…LPSA), 85–105 (LEQL…YFRG), and 108–128 (KLLY…ASNT). Asn-5 carries N-linked (GlcNAc...) (keratan sulfate) asparagine glycosylation. Asn-40 carries N-linked (GlcNAc...) (keratan sulfate) asparagine glycosylation. Asn-130 carries an N-linked (GlcNAc...) (keratan sulfate) asparagine glycan. Residues 133–147 (SLLELDLSYNQLQKI) form an LRR 7 repeat.

The protein belongs to the small leucine-rich proteoglycan (SLRP) family. SLRP class II subfamily. As to quaternary structure, binds to type I and type II collagen. Post-translationally, binds keratan sulfate chains.

The protein resides in the secreted. Its subcellular location is the extracellular space. It is found in the extracellular matrix. Affects the rate of fibrils formation. May have a primary role in collagen fibrillogenesis. The polypeptide is Fibromodulin (FMOD) (Sus scrofa (Pig)).